The primary structure comprises 441 residues: MSKNDSIAIIGGGLAGCEAAWQLLNKGHSVTLYEMKPVNFSPAHRSSHLAELVCSNSLRSNIIENAAGTLKEEMRRMNSLIMSAADATSVPAGRALAVDRRAFSKFIEKKLKEFPKLTIIHQEITDIPADGLVIIATGPLTSDSLSQSIAGITGNSYLYFYDAISPVIEADSIDYEKVFRASRYDDDGQGDYLNCSMGKEEYELFWKTLTEGQTVSLRDFEDYKYFEGCLPIEVIAGRGVSTLLFGPMKPVGIVDPKTGKQPYAVIQLRQENREATLFNIVGFQTKLTWTEQRRIFRMIPGLGNAEFARYGSIHRNTFINSPALLEKTLQLKTAEHIFFAGQITGVEGYIESTAMGLMAGLSVSEFHKGKSFLPPPPETAMGALLNHITDTDSKQFQPMNINWGLVSPLPGKVKKRERGERYAHRALESLARWQSETSAEH.

11–16 (GGGLAG) contacts FAD.

The protein belongs to the MnmG family. TrmFO subfamily. FAD is required as a cofactor.

It is found in the cytoplasm. The catalysed reaction is uridine(54) in tRNA + (6R)-5,10-methylene-5,6,7,8-tetrahydrofolate + NADH + H(+) = 5-methyluridine(54) in tRNA + (6S)-5,6,7,8-tetrahydrofolate + NAD(+). It catalyses the reaction uridine(54) in tRNA + (6R)-5,10-methylene-5,6,7,8-tetrahydrofolate + NADPH + H(+) = 5-methyluridine(54) in tRNA + (6S)-5,6,7,8-tetrahydrofolate + NADP(+). Functionally, catalyzes the folate-dependent formation of 5-methyl-uridine at position 54 (M-5-U54) in all tRNAs. The sequence is that of Methylenetetrahydrofolate--tRNA-(uracil-5-)-methyltransferase TrmFO from Syntrophus aciditrophicus (strain SB).